We begin with the raw amino-acid sequence, 96 residues long: MTATFNPQANTVFCRKYQQDLPKMPHPPFPNKKGQELQETVSEKAWKEWLEQQTMLINENHLSMLDPKAKQFLTEQRDKFLDNEDYERAQGWTPES.

The tract at residues 21-40 (LPKMPHPPFPNKKGQELQET) is disordered.

It belongs to the Fe(2+)-trafficking protein family.

Its function is as follows. Could be a mediator in iron transactions between iron acquisition and iron-requiring processes, such as synthesis and/or repair of Fe-S clusters in biosynthetic enzymes. The chain is Probable Fe(2+)-trafficking protein from Psychrobacter arcticus (strain DSM 17307 / VKM B-2377 / 273-4).